The primary structure comprises 201 residues: Prostamide/prostaglandin F synthase (201 aa).

It belongs to the peroxiredoxin-like PRXL2 family. Prostamide/prostaglandin F synthase subfamily.

It is found in the cytoplasm. The protein resides in the cytosol. It catalyses the reaction prostaglandin H2 + [thioredoxin]-dithiol = prostaglandin F2alpha + [thioredoxin]-disulfide. The catalysed reaction is prostamide F2alpha + [thioredoxin]-disulfide = prostamide H2 + [thioredoxin]-dithiol. Its function is as follows. Catalyzes the reduction of prostaglandin-ethanolamide H(2) (prostamide H(2)) to prostamide F(2alpha) with NADPH as proton donor. Also able to reduce prostaglandin H(2) to prostaglandin F(2alpha). The chain is Prostamide/prostaglandin F synthase (prxl2b) from Xenopus laevis (African clawed frog).